We begin with the raw amino-acid sequence, 414 residues long: MLKRLMLASAILPVVSFAESDPLDVLLKKLEEKGVITKEEAKEVKKVAKKHPHLKVKIRLQPRIDFGDIYKENNDYKSRSDFYFRRVRLEISKEWKNIPFGKKLKINFTLHSDKGERDYDYKKGEKEHHSFDPKVKYAYADWTFVDEFAVRIGKNKIPYSRVSLTSSSRQLLIERPYVTEDAKKWLGDYDSNQIMFHGKVAGGIFRYMLSIWDGSTIESKNKTGGTVKADTSLGDAYAIRLEFSPPGFVEKKKDDTGIGEKNKGDVISVGLNYAKNSDFDITDKNIKNEEATVWGGDIFGRFHLGPGALVAQAEYVKMKYDKLDLEEKGYYIQAGYLIPTPYGKFEPAARYEHFKQEDKKNDVTKHKKDIITLGFNHYIKGHKIKWGYNVLFIDNKEKDEKDQTVHQIQMQFYF.

The first 18 residues, 1–18, serve as a signal peptide directing secretion; that stretch reads MLKRLMLASAILPVVSFA.

This is an uncharacterized protein from Aquifex aeolicus (strain VF5).